Consider the following 474-residue polypeptide: Protein CyaE (474 aa).

A signal peptide spans 1 to 31 (MAAVQVRRRGRALALALWAGFALSVGGGVRA).

It belongs to the outer membrane factor (OMF) (TC 1.B.17) family.

It localises to the cell outer membrane. Its function is as follows. CyaE is necessary for transport of calmodulin-sensitive adenylate cyclase-hemolysin (cyclolysin). This chain is Protein CyaE (cyaE), found in Bordetella pertussis (strain Tohama I / ATCC BAA-589 / NCTC 13251).